Consider the following 212-residue polypeptide: Tubulin alpha chain (212 aa).

Asn3 and Asn25 together coordinate GTP. Glu51 is an active-site residue.

This sequence belongs to the tubulin family. Dimer of alpha and beta chains. A typical microtubule is a hollow water-filled tube with an outer diameter of 25 nm and an inner diameter of 15 nM. Alpha-beta heterodimers associate head-to-tail to form protofilaments running lengthwise along the microtubule wall with the beta-tubulin subunit facing the microtubule plus end conferring a structural polarity. Microtubules usually have 13 protofilaments but different protofilament numbers can be found in some organisms and specialized cells. The cofactor is Mg(2+).

It localises to the cytoplasm. Its subcellular location is the cytoskeleton. The catalysed reaction is GTP + H2O = GDP + phosphate + H(+). Its function is as follows. Tubulin is the major constituent of microtubules, a cylinder consisting of laterally associated linear protofilaments composed of alpha- and beta-tubulin heterodimers. Microtubules grow by the addition of GTP-tubulin dimers to the microtubule end, where a stabilizing cap forms. Below the cap, tubulin dimers are in GDP-bound state, owing to GTPase activity of alpha-tubulin. The protein is Tubulin alpha chain (TUB-A) of Pneumocystis carinii.